Reading from the N-terminus, the 192-residue chain is Pyridoxal 5'-phosphate synthase subunit PdxT (192 aa).

Residue glycine 47–serine 49 coordinates L-glutamine. Cysteine 79 (nucleophile) is an active-site residue. Residues arginine 106 and isoleucine 134–arginine 135 contribute to the L-glutamine site. Residues histidine 170 and glutamate 172 each act as charge relay system in the active site.

The protein belongs to the glutaminase PdxT/SNO family. As to quaternary structure, in the presence of PdxS, forms a dodecamer of heterodimers. Only shows activity in the heterodimer.

The catalysed reaction is aldehydo-D-ribose 5-phosphate + D-glyceraldehyde 3-phosphate + L-glutamine = pyridoxal 5'-phosphate + L-glutamate + phosphate + 3 H2O + H(+). It catalyses the reaction L-glutamine + H2O = L-glutamate + NH4(+). It participates in cofactor biosynthesis; pyridoxal 5'-phosphate biosynthesis. Catalyzes the hydrolysis of glutamine to glutamate and ammonia as part of the biosynthesis of pyridoxal 5'-phosphate. The resulting ammonia molecule is channeled to the active site of PdxS. This chain is Pyridoxal 5'-phosphate synthase subunit PdxT, found in Anoxybacillus flavithermus (strain DSM 21510 / WK1).